A 620-amino-acid chain; its full sequence is 1-deoxy-D-xylulose-5-phosphate synthase (620 aa).

Thiamine diphosphate-binding positions include H80 and 121–123 (GHS). Residue D152 participates in Mg(2+) binding. Residues 153–154 (GA), N181, Y288, and E370 each bind thiamine diphosphate. Mg(2+) is bound at residue N181.

Belongs to the transketolase family. DXPS subfamily. As to quaternary structure, homodimer. Mg(2+) is required as a cofactor. Requires thiamine diphosphate as cofactor.

The catalysed reaction is D-glyceraldehyde 3-phosphate + pyruvate + H(+) = 1-deoxy-D-xylulose 5-phosphate + CO2. Its pathway is metabolic intermediate biosynthesis; 1-deoxy-D-xylulose 5-phosphate biosynthesis; 1-deoxy-D-xylulose 5-phosphate from D-glyceraldehyde 3-phosphate and pyruvate: step 1/1. In terms of biological role, catalyzes the acyloin condensation reaction between C atoms 2 and 3 of pyruvate and glyceraldehyde 3-phosphate to yield 1-deoxy-D-xylulose-5-phosphate (DXP). This chain is 1-deoxy-D-xylulose-5-phosphate synthase, found in Pseudoalteromonas translucida (strain TAC 125).